Here is a 119-residue protein sequence, read N- to C-terminus: Large ribosomal subunit protein bL17 (119 aa).

It belongs to the bacterial ribosomal protein bL17 family. Part of the 50S ribosomal subunit. Contacts protein L32.

In Malacoplasma penetrans (strain HF-2) (Mycoplasma penetrans), this protein is Large ribosomal subunit protein bL17.